Here is a 500-residue protein sequence, read N- to C-terminus: L-arabinose isomerase (500 aa).

Residues glutamate 306, glutamate 333, histidine 350, and histidine 450 each coordinate Mn(2+).

This sequence belongs to the arabinose isomerase family. Homohexamer. It depends on Mn(2+) as a cofactor.

The enzyme catalyses beta-L-arabinopyranose = L-ribulose. It participates in carbohydrate degradation; L-arabinose degradation via L-ribulose; D-xylulose 5-phosphate from L-arabinose (bacterial route): step 1/3. Catalyzes the conversion of L-arabinose to L-ribulose. This is L-arabinose isomerase from Salmonella newport (strain SL254).